We begin with the raw amino-acid sequence, 511 residues long: Ribosome biogenesis protein YTM1 (511 aa).

A ubiquitin-like (UBL) domain region spans residues 9 to 112 (VKVVFVTRDE…EVSLSIEYIR (104 aa)). A sufficient for interaction with ERB1 and association with 66S pre-ribosomes region spans residues 122 to 511 (SFSNPDWVAA…IQINNNPQSA (390 aa)). WD repeat units lie at residues 124–168 (SNPD…TGQL), 170–208 (GHNS…YRRK), 248–287 (GHTA…MPAI), 332–372 (GHSA…AVQS), 383–423 (TRST…QVAT), 429–470 (GHTN…SLHV), and 477–511 (TENN…PQSA). The segment at 207–228 (RKEPGQVGKKELNYDSEEDSDE) is disordered. Residues 208–219 (KEPGQVGKKELN) are compositionally biased toward basic and acidic residues.

This sequence belongs to the WD repeat WDR12/YTM1 family. Component of the NOP7 complex, composed of ERB1, NOP7 and YTM1. The complex is held together by ERB1, which interacts with NOP7 via its N-terminal domain and with YTM1 via a high-affinity interaction between the seven-bladed beta-propeller domains of the 2 proteins. The NOP7 complex associates with the 66S pre-ribosome. Interacts (via UBL domain) with MDN1 (via VWFA/MIDAS domain).

The protein localises to the nucleus. It is found in the nucleolus. The protein resides in the nucleoplasm. In terms of biological role, component of the NOP7 complex, which is required for maturation of the 25S and 5.8S ribosomal RNAs and formation of the 60S ribosome. The polypeptide is Ribosome biogenesis protein YTM1 (Yarrowia lipolytica (strain CLIB 122 / E 150) (Yeast)).